Here is a 199-residue protein sequence, read N- to C-terminus: MKQSHFFAHLSRLKLINRWPLMRNVRTENVSEHSLQVAMVAHALAAIKNRKFGGNVNAERIALLAMYHDASEVLTGDLPTPVKYFNSQIAQEYKAIEKIAQQKLVDMVPEELRDIFAPLIDEHAYSDEEKSLVKQADALCAYLKCLEELAAGNNEFLLAKTRLEATLEARRSQEMDYFMEIFVPSFHLSLDEISQDSPL.

Substrate contacts are provided by residues 18–19 (RW) and H33. Residues 30–142 (VSEHSLQVAM…VKQADALCAY (113 aa)) enclose the HD domain. Residues H33, H68, and D69 each contribute to the a divalent metal cation site. Substrate contacts are provided by residues D69, 77 to 80 (DLPT), and D137. An a divalent metal cation-binding site is contributed by D137.

It belongs to the 5DNU family. Homodimer. It depends on a divalent metal cation as a cofactor.

It localises to the cytoplasm. It carries out the reaction a 2'-deoxyribonucleoside 5'-phosphate + H2O = a 2'-deoxyribonucleoside + phosphate. Catalyzes the strictly specific dephosphorylation of 2'-deoxyribonucleoside 5'-monophosphates. This chain is 5'-deoxynucleotidase YfbR, found in Escherichia coli (strain K12 / MC4100 / BW2952).